The chain runs to 447 residues: Omega-6 fatty acid desaturase, chloroplastic (447 aa).

A chloroplast-targeting transit peptide spans 1 to 65 (MESAITISNH…TRRKSTLVQA (65 aa)). Position 66 is an N-acetylvaline (V66). Positions 171–175 (HDCAH) match the Histidine box-1 motif. Positions 207–211 (HDQHH) match the Histidine box-2 motif. Residues 367–371 (HIPHH) carry the Histidine box-3 motif.

Belongs to the fatty acid desaturase type 1 family.

The protein resides in the plastid. The protein localises to the chloroplast membrane. The catalysed reaction is a (9Z)-octadecenoyl-containing glycerolipid + 2 reduced [2Fe-2S]-[ferredoxin] + O2 + 2 H(+) = a (9Z,12Z)-octadecadienoyl-containing glycerolipid + 2 oxidized [2Fe-2S]-[ferredoxin] + 2 H2O. Its pathway is lipid metabolism; polyunsaturated fatty acid biosynthesis. Functionally, chloroplast omega-6 fatty acid desaturase introduces the second double bond in the biosynthesis of 16:3 and 18:3 fatty acids, important constituents of plant membranes. It is thought to use ferredoxin as an electron donor and to act on fatty acids esterified to galactolipids, sulfolipids and phosphatidylglycerol. In Spinacia oleracea (Spinach), this protein is Omega-6 fatty acid desaturase, chloroplastic.